Reading from the N-terminus, the 417-residue chain is Inactive cytochrome P450 76AD1 (417 aa).

A helical transmembrane segment spans residues 4 to 24 (ATLAMILAIWFISFHFIKLLF).

Belongs to the cytochrome P450 family.

It is found in the membrane. It functions in the pathway pigment biosynthesis; betalain biosynthesis. Its function is as follows. Inactive cytochrome unable to convert L-DOPA to cyclo-DOPA in the betalain pathway and producing a yellow mutant phenotype. A frameshift replaces 108 amino acids of the active protein found in red beets (AC I3PFJ5) with 27 new residues followed by a stop codon. The protein is Inactive cytochrome P450 76AD1 of Beta vulgaris (Sugar beet).